Consider the following 317-residue polypeptide: uncharacterized protein (317 aa).

7 consecutive transmembrane segments (helical) span residues 18-38 (FWLI…LVII), 58-78 (IILS…GFIF), 92-112 (FLGS…WWSF), 130-150 (LFSA…AWAV), 159-179 (LFHI…KLLP), 202-222 (CSFL…LSTV), and 252-272 (NLLN…LLIA).

Belongs to the CbiQ family.

It is found in the cell membrane. This is an uncharacterized protein from Mycoplasma genitalium (strain ATCC 33530 / DSM 19775 / NCTC 10195 / G37) (Mycoplasmoides genitalium).